A 396-amino-acid polypeptide reads, in one-letter code: S-adenosylmethionine synthase (396 aa).

His-14 serves as a coordination point for ATP. Position 16 (Asp-16) interacts with Mg(2+). K(+) is bound at residue Glu-42. L-methionine contacts are provided by Glu-55 and Gln-98. Positions 98–108 (QSPDIAQGVHG) are flexible loop. ATP-binding positions include 167–169 (DAK), 234–235 (RF), Asp-243, 249–250 (RK), Ser-266, and Lys-270. Residue Asp-243 participates in L-methionine binding. Lys-274 is a binding site for L-methionine.

It belongs to the AdoMet synthase family. Homotetramer; dimer of dimers. Mg(2+) serves as cofactor. Requires K(+) as cofactor.

The protein localises to the cytoplasm. The enzyme catalyses L-methionine + ATP + H2O = S-adenosyl-L-methionine + phosphate + diphosphate. It functions in the pathway amino-acid biosynthesis; S-adenosyl-L-methionine biosynthesis; S-adenosyl-L-methionine from L-methionine: step 1/1. Its function is as follows. Catalyzes the formation of S-adenosylmethionine (AdoMet) from methionine and ATP. The overall synthetic reaction is composed of two sequential steps, AdoMet formation and the subsequent tripolyphosphate hydrolysis which occurs prior to release of AdoMet from the enzyme. The protein is S-adenosylmethionine synthase of Treponema pallidum (strain Nichols).